The following is a 162-amino-acid chain: MGLETEKADVQLFMDDDSYSHHSGLEYADPEKFADSGQDRDPHRLNSHLKLGFEDVIAEPVTTHSFDKVWICSHALFEISKYVMYKFLTVFLAIPLAFIAGILFATLSCLHIWILMPFVKTCLMVLPSVQTIWKSVTDVFIAPLCTSVGRSFSSVSLQLSQD.

At 1-86 (MGLETEKADV…FEISKYVMYK (86 aa)) the chain is on the cytoplasmic side. Residue Y19 is modified to Phosphotyrosine; by SRC. Residues S20 and S23 each carry the phosphoserine modification. Y27 bears the Phosphotyrosine; by SRC mark. Residue S36 is modified to Phosphoserine. The helical intramembrane region spans 87–107 (FLTVFLAIPLAFIAGILFATL). Residues 108–162 (SCLHIWILMPFVKTCLMVLPSVQTIWKSVTDVFIAPLCTSVGRSFSSVSLQLSQD) lie on the Cytoplasmic side of the membrane.

It belongs to the caveolin family. In terms of assembly, monomer or homodimer. Interacts with CAV1; the interaction forms a stable heterooligomeric complex that is required for targeting to lipid rafts and for caveolae formation. Tyrosine phosphorylated forms do not form heterooligomers with the Tyr-19-phosphorylated form existing as a monomer or dimer, and the Tyr-27-form as a monomer only. Interacts (tyrosine phosphorylated form) with the SH2 domain-containing proteins, RASA1, NCK1 and SRC. Interacts (tyrosine phosphorylated form) with INSR, the interaction (Tyr-27-phosphorylated form) is increased on insulin stimulation. Interacts (Tyr-19 phosphorylated form) with MAPK1 (phosphorylated form); the interaction, promoted by insulin, leads to nuclear location and MAPK1 activation. Interacts with STAT3; the interaction is increased on insulin-induced tyrosine phosphorylation leading to STAT activation. In terms of processing, phosphorylated on serine and tyrosine residues. CAV1 promotes phosphorylation on Ser-23 which then targets the complex to the plasma membrane, lipid rafts and caveolae. Phosphorylation on Ser-36 appears to modulate mitosis in endothelial cells. Phosphorylation on both Tyr-19 and Tyr-27 is required for insulin-induced 'Ser-727' phosphorylation of STAT3 and its activation. Phosphorylation on Tyr-19 is required for insulin-induced phosphorylation of MAPK1 and DNA binding of STAT3. Tyrosine phosphorylation is induced by both EGF and insulin (By. similarity).

It is found in the nucleus. The protein resides in the cytoplasm. Its subcellular location is the golgi apparatus membrane. It localises to the cell membrane. The protein localises to the membrane. It is found in the caveola. Functionally, may act as a scaffolding protein within caveolar membranes. Interacts directly with G-protein alpha subunits and can functionally regulate their activity. Acts as an accessory protein in conjunction with CAV1 in targeting to lipid rafts and driving caveolae formation. The Ser-36 phosphorylated form has a role in modulating mitosis in endothelial cells. Positive regulator of cellular mitogenesis of the MAPK signaling pathway. Required for the insulin-stimulated nuclear translocation and activation of MAPK1 and STAT3, and the subsequent regulation of cell cycle progression. This is Caveolin-2 (CAV2) from Chlorocebus aethiops (Green monkey).